The primary structure comprises 1214 residues: Peregrin (1214 aa).

The C2H2-type zinc finger occupies 21–47; it reads YECPVETCRKVYKSYSGIEYHLYHYDH. Disordered regions lie at residues 43 to 87 and 118 to 177; these read YHYD…SPGR and VVSE…PKLP. Positions 58-67 are enriched in basic residues; sequence LRKHKKKGRQ. The tract at residues 59–222 is interaction with KAT6A and KAT6B; the sequence is RKHKKKGRQS…VEYDMDEEDY (164 aa). Residues 74-85 show a composition bias toward low complexity; that stretch reads QSPSPSEVSQSP. Positions 119-130 are enriched in acidic residues; sequence VSEDEEAPEEAP. The residue at position 120 (Ser-120) is a Phosphoserine. Lys-147 carries the post-translational modification N6-acetyllysine. Basic residues predominate over residues 148 to 167; it reads SGKHKNKEKRKDSNHHHHHN. Phosphoserine is present on Ser-238. Residues 273–323 form a PHD-type 1 zinc finger; it reads DAVCCICNDGECQNSNVILFCDMCNLAVHQECYGVPYIPEGQWLCRRCLQS. The segment at 327-360 adopts a C2HC pre-PHD-type zinc-finger fold; it reads AVDCALCPNKGGAFKQTDDGRWAHVVCALWIPEV. Residues 384–448 form a PHD-type 2 zinc finger; it reads LTCYICKQRG…RKTAYCDIHT (65 aa). The tract at residues 448 to 489 is disordered; that stretch reads TPPGSARRLPALSHSEGEEDEDEEEDEGKGWSSEKVKKAKAK. Residues Ser-460 and Ser-462 each carry the phosphoserine modification. The segment covering 464–474 has biased composition (acidic residues); it reads GEEDEDEEEDE. Residues 501 to 821 form an interaction with MEAF6 and ING5 region; it reads LAEKRAAAPV…IKKEMTALRR (321 aa). Residues 543-1079 form a required for RUNX1 and RUNX2 transcriptional activation region; that stretch reads YWTLKRQSRN…RGAGWLSEDE (537 aa). An N6-acetyllysine modification is found at Lys-580. The Bromo domain occupies 628 to 732; it reads MQLTPFLILL…EQGGAVLRQA (105 aa). A disordered region spans residues 819-1062; sequence LRRKLAHQRE…VGTGRGVGHS (244 aa). Residues 825 to 838 show a composition bias toward basic and acidic residues; the sequence is HQRETGRDGPERHG. At Thr-858 the chain carries Phosphothreonine. Residues 858–871 are compositionally biased toward low complexity; sequence TDSAAEESSSQETS. 4 positions are modified to phosphoserine: Ser-860, Ser-917, Ser-922, and Ser-926. Residues 993-1021 show a composition bias toward low complexity; it reads SLPRSSSDSESSSSSSSSAASDRTSTTPS. Phosphoserine is present on Ser-1076. The PWWP domain maps to 1085–1168; it reads ALDLVWAKCR…RTKLVPLGVN (84 aa). Ser-1187 is modified (phosphoserine).

Component of some HBO1 complex composed of KAT7/HBO1, MEAF6, ING5, and BRPF1. Component of the MOZ/MORF complex composed at least of ING5, KAT6A, KAT6B, MEAF6 and one of BRPF1, BRD1/BRPF2 and BRPF3. Interacts (via PHD-type zinc finger domains) with unmethylated histone H3 at 'Lys-4' (H3K4me0). Interacts with trimethylated 'Lys-36' of histone H3 (H3K36me3). Interacts with ING5; interaction directs BRPF1 to H4K4me3-enriched chromatin at the 5' of active genes. Interacts with KAT7. Acetylated by KAT6A. High levels in testis.

The protein localises to the nucleus. It localises to the chromosome. The protein resides in the cytoplasm. Scaffold subunit of various histone acetyltransferase (HAT) complexes, such as the MOZ/MORF and HBO1 complexes, which have a histone H3 acetyltransferase activity. Plays a key role in HBO1 complex by directing KAT7/HBO1 specificity towards histone H3 'Lys-14' acetylation (H3K14ac). Some HAT complexes preferentially mediate histone H3 'Lys-23' (H3K23ac) acetylation. Positively regulates the transcription of RUNX1 and RUNX2. This is Peregrin from Homo sapiens (Human).